A 119-amino-acid chain; its full sequence is uncharacterized protein (119 aa).

A disulfide bridge links C9 with C12.

This sequence belongs to the ArsC family.

This is an uncharacterized protein from Streptomyces viridochromogenes.